Consider the following 141-residue polypeptide: Ribosome-binding factor A (141 aa).

It belongs to the RbfA family. As to quaternary structure, monomer. Binds 30S ribosomal subunits, but not 50S ribosomal subunits or 70S ribosomes.

The protein resides in the cytoplasm. In terms of biological role, one of several proteins that assist in the late maturation steps of the functional core of the 30S ribosomal subunit. Associates with free 30S ribosomal subunits (but not with 30S subunits that are part of 70S ribosomes or polysomes). Required for efficient processing of 16S rRNA. May interact with the 5'-terminal helix region of 16S rRNA. The protein is Ribosome-binding factor A of Beijerinckia indica subsp. indica (strain ATCC 9039 / DSM 1715 / NCIMB 8712).